The following is a 467-amino-acid chain: uncharacterized protein (467 aa).

This is an uncharacterized protein from Acanthamoeba polyphaga (Amoeba).